The primary structure comprises 330 residues: Phenylalanine--tRNA ligase alpha subunit (330 aa).

Position 246 (Glu-246) interacts with Mg(2+).

This sequence belongs to the class-II aminoacyl-tRNA synthetase family. Phe-tRNA synthetase alpha subunit type 1 subfamily. Tetramer of two alpha and two beta subunits. It depends on Mg(2+) as a cofactor.

It is found in the cytoplasm. It catalyses the reaction tRNA(Phe) + L-phenylalanine + ATP = L-phenylalanyl-tRNA(Phe) + AMP + diphosphate + H(+). The polypeptide is Phenylalanine--tRNA ligase alpha subunit (Campylobacter jejuni subsp. doylei (strain ATCC BAA-1458 / RM4099 / 269.97)).